Consider the following 130-residue polypeptide: Small ribosomal subunit protein uS8 (130 aa).

This sequence belongs to the universal ribosomal protein uS8 family. As to quaternary structure, part of the 30S ribosomal subunit. Contacts proteins S5 and S12.

In terms of biological role, one of the primary rRNA binding proteins, it binds directly to 16S rRNA central domain where it helps coordinate assembly of the platform of the 30S subunit. The chain is Small ribosomal subunit protein uS8 from Shewanella pealeana (strain ATCC 700345 / ANG-SQ1).